The following is a 194-amino-acid chain: Protein cholesin (194 aa).

Residues 1–83 (MAKQKRKVPE…RKKEERQRLR (83 aa)) are disordered. Ser-23 and Ser-59 each carry phosphoserine. The span at 61-83 (EEQRVLERKLKKERKKEERQRLR) shows a compositional bias: basic and acidic residues. Phosphoserine occurs at positions 97 and 175.

As to expression, secreted from the instestine, secretion is induced by feeding and cholesterol absorption.

The protein localises to the secreted. In terms of biological role, hormone secreted from the intestine in response to cholesterol, where it acts to inhibit cholesterol synthesis in the liver and VLDL secretion,leading to a reduction in circulating cholesterol levels. Acts through binding to its receptor, GPR146. This chain is Protein cholesin, found in Homo sapiens (Human).